Here is a 496-residue protein sequence, read N- to C-terminus: Glycerol kinase (496 aa).

An ADP-binding site is contributed by T12. Residues T12, T13, and S14 each coordinate ATP. T12 contacts sn-glycerol 3-phosphate. An ADP-binding site is contributed by R16. Positions 82, 83, and 134 each coordinate sn-glycerol 3-phosphate. R82, E83, and Y134 together coordinate glycerol. Position 230 is a phosphohistidine; by HPr (H230). Residue D244 coordinates sn-glycerol 3-phosphate. Glycerol contacts are provided by D244 and Q245. ADP contacts are provided by T266 and G309. 4 residues coordinate ATP: T266, G309, Q313, and G410. ADP-binding residues include G410 and N414.

Belongs to the FGGY kinase family. In terms of assembly, homotetramer and homodimer (in equilibrium). Post-translationally, the phosphoenolpyruvate-dependent sugar phosphotransferase system (PTS), including enzyme I, and histidine-containing protein (HPr) are required for the phosphorylation, which leads to the activation of the enzyme.

It catalyses the reaction glycerol + ATP = sn-glycerol 3-phosphate + ADP + H(+). The protein operates within polyol metabolism; glycerol degradation via glycerol kinase pathway; sn-glycerol 3-phosphate from glycerol: step 1/1. With respect to regulation, activated by phosphorylation and inhibited by fructose 1,6-bisphosphate (FBP). Its function is as follows. Key enzyme in the regulation of glycerol uptake and metabolism. Catalyzes the phosphorylation of glycerol to yield sn-glycerol 3-phosphate. The chain is Glycerol kinase from Bacillus velezensis (strain DSM 23117 / BGSC 10A6 / LMG 26770 / FZB42) (Bacillus amyloliquefaciens subsp. plantarum).